A 62-amino-acid polypeptide reads, in one-letter code: UPF0291 protein CLI_2672 (62 aa).

Belongs to the UPF0291 family.

It localises to the cytoplasm. The chain is UPF0291 protein CLI_2672 from Clostridium botulinum (strain Langeland / NCTC 10281 / Type F).